Here is a 1936-residue protein sequence, read N- to C-terminus: Probable inactive serine/threonine-protein kinase DDB_G0278909 (1936 aa).

5 LRR repeats span residues 61–82 (LLEK…GHLN), 83–103 (KLKR…QGLS), 104–125 (SLVY…SDCK), 126–147 (KLIN…DHFS), and 151–173 (SLKV…QKKI). The region spanning 191–230 (NLIEKKYEEFRLFVINELPKLKYLNWVLISKDERTKASKL) is the LRRCT domain. Low complexity-rich tracts occupy residues 253–285 (NNPN…SSNN) and 293–302 (TTTSVSVGSS). Disordered stretches follow at residues 253 to 319 (NNPN…STSF) and 347 to 386 (KERE…IDET). Residues 310–319 (SSPNSRSTSF) are compositionally biased toward polar residues. 2 HEAT repeats span residues 325 to 368 (SVGA…SSSS) and 439 to 476 (QETE…DLLY). Residues 353-373 (QSTSPSSSSLSISSSSQNNNS) are compositionally biased toward low complexity. The segment covering 516 to 526 (LSSSSSSSSTT) has biased composition (low complexity). 5 disordered regions span residues 516 to 544 (LSSS…QLDL), 599 to 620 (NSTL…SPKL), 660 to 689 (IDQN…INNN), 702 to 756 (QSIL…PIMK), and 769 to 809 (QDQP…HFKS). A compositionally biased stretch (pro residues) spans 527 to 538 (PPQPQLPPPPPQ). 2 HEAT repeats span residues 574 to 614 (PVVS…TTPP) and 617 to 654 (SPKL…GSAK). Positions 600-612 (STLSTTPPLSSTT) are enriched in low complexity. A compositionally biased stretch (polar residues) spans 660–673 (IDQNTATTPSTPSK). The span at 736–756 (STTTNTTPTSTPGSPSKPIMK) shows a compositional bias: low complexity. Residues 774 to 785 (IVSPPQPQPQPP) show a composition bias toward pro residues. The span at 786–805 (IVQQKQQQQQQQQQQQQPQQ) shows a compositional bias: low complexity. Positions 961-1241 (IQVGSRLGLG…ISKILSQPFQ (281 aa)) constitute a Protein kinase domain. ATP is bound by residues 967 to 975 (LGLGSFGDC) and Lys988. 2 disordered regions span residues 1050–1075 (SHNN…NNNN) and 1261–1308 (NTTI…VKHQ). Low complexity-rich tracts occupy residues 1052–1075 (NNNN…NNNN), 1266–1282 (SSSS…VGSV), and 1291–1302 (NNSNTGSTGSTS). HEAT repeat units follow at residues 1317–1356 (RKMI…ALKA), 1512–1549 (FIEE…NQNC), 1553–1590 (LHNA…DIEF), 1598–1635 (NCLS…SICS), 1690–1728 (QSRL…LFSS), 1739–1775 (SMSV…VNNK), 1780–1817 (IHMM…SQEC), 1821–1858 (FLQK…DDSA), and 1863–1900 (RDNQ…KQIN).

This chain is Probable inactive serine/threonine-protein kinase DDB_G0278909, found in Dictyostelium discoideum (Social amoeba).